The chain runs to 657 residues: uncharacterized protein (657 aa).

Active-site charge relay system residues include Ser518 and His631.

This sequence belongs to the peptidase S9C family.

This is an uncharacterized protein from Bacillus subtilis (strain 168).